The sequence spans 470 residues: 1-aminocyclopropane-1-carboxylate synthase 9 (470 aa).

E47 and Y85 together coordinate substrate. An N6-(pyridoxal phosphate)lysine modification is found at K272.

This sequence belongs to the class-I pyridoxal-phosphate-dependent aminotransferase family. In terms of assembly, homodimer and heterodimer. In vivo, the relevance of heterodimerization with other ACS enzymes is however unsure. Interacts (via its C-terminal region) with FEI1, FEI2, ETO1 and EOL1. It depends on pyridoxal 5'-phosphate as a cofactor. In terms of processing, may be processed at its C-terminus. Expressed in roots and siliques.

The catalysed reaction is S-adenosyl-L-methionine = 1-aminocyclopropane-1-carboxylate + S-methyl-5'-thioadenosine + H(+). The protein operates within alkene biosynthesis; ethylene biosynthesis via S-adenosyl-L-methionine; ethylene from S-adenosyl-L-methionine: step 1/2. In terms of biological role, 1-aminocyclopropane-1-carboxylate synthase (ACS) enzymes catalyze the conversion of S-adenosyl-L-methionine (SAM) into 1-aminocyclopropane-1-carboxylate (ACC), a direct precursor of ethylene. The sequence is that of 1-aminocyclopropane-1-carboxylate synthase 9 (ACS9) from Arabidopsis thaliana (Mouse-ear cress).